Here is a 183-residue protein sequence, read N- to C-terminus: Translation initiation factor IF-3 (183 aa).

It belongs to the IF-3 family. Monomer.

The protein localises to the cytoplasm. Its function is as follows. IF-3 binds to the 30S ribosomal subunit and shifts the equilibrium between 70S ribosomes and their 50S and 30S subunits in favor of the free subunits, thus enhancing the availability of 30S subunits on which protein synthesis initiation begins. This Pseudomonas putida (strain W619) protein is Translation initiation factor IF-3.